Here is a 798-residue protein sequence, read N- to C-terminus: Putative antiporter subunit mnhA2 (798 aa).

21 helical membrane-spanning segments follow: residues 1 to 21 (MSLVYLLSTLILIMVILLFTL), 33 to 53 (IALLAPIVASVYFLYQLPSVM), 78 to 98 (GLSLFFSLLISLIGLAVVYYA), 109 to 129 (LPRFYVYLLLFMFSMLGIVTA), 133 to 153 (ILMYVFWELTSVSSFLLIVYW), 167 to 187 (FMITVFGGLALLAGFIMIYIV), 209 to 229 (FIPIIILLLLGAFTKSAQFPF), 241 to 261 (TPVSAYLHSATMVKAGIFLLF), 272 to 292 (FYIYSVTFVGLITMIFGAVNA), 300 to 320 (AILAYSTISQLGMIVSMVGLG), 337 to 357 (MILFAALFHLMNHALYKGALF), 381 to 401 (VFPITHIVMLLSALSMAGIPF), 431 to 451 (IITVIGVIASIFTLVYGVYMI), 472 to 492 (PFLFTLPSAIMMILLPVIFFI), 526 to 546 (GFNLPLILSLIVIVVGFIMAL), 593 to 613 (ITITLLIFSMVVIYGMIQAGF), 625 to 645 (GPIEVITLIVVFVLGIALTFI), 649 to 669 (LTMVVLNGIIGYCVTIFFILM), 674 to 694 (LALTQLVVETITTILFIVSFS), 710 to 730 (AVKIIVSLLMAVIVVTLVFIA), and 766 to 786 (IDTLFEGMVLIIAGLGIYTLL).

This sequence belongs to the CPA3 antiporters (TC 2.A.63) subunit A family. As to quaternary structure, may form a heterooligomeric complex that consists of seven subunits: mnhA2, mnhB2, mnhC2, mnhD2, mnhE2, mnhF2 and mnhG2.

It localises to the cell membrane. The sequence is that of Putative antiporter subunit mnhA2 (mnhA2) from Staphylococcus saprophyticus subsp. saprophyticus (strain ATCC 15305 / DSM 20229 / NCIMB 8711 / NCTC 7292 / S-41).